The sequence spans 281 residues: Secretory carrier-associated membrane protein 5 (281 aa).

The disordered stretch occupies residues methionine 1–glycine 49. Residues methionine 1–alanine 139 lie on the Cytoplasmic side of the membrane. Residues asparagine 19–glycine 49 are compositionally biased toward gly residues. Residues lysine 76–alanine 102 are a coiled coil. 4 helical membrane-spanning segments follow: residues serine 140–isoleucine 160, leucine 167–tyrosine 187, phenylalanine 202–alanine 222, and isoleucine 250–leucine 270. Residues glutamine 271–lysine 281 lie on the Cytoplasmic side of the membrane.

The protein belongs to the SCAMP family.

It localises to the cell membrane. The protein localises to the cytoplasmic vesicle. Its subcellular location is the secretory vesicle membrane. Its function is as follows. Probably involved in membrane trafficking. In Oryza sativa subsp. japonica (Rice), this protein is Secretory carrier-associated membrane protein 5 (SCAMP5).